A 465-amino-acid polypeptide reads, in one-letter code: Interferon-inducible GTPase 5 (465 aa).

The 183-residue stretch at 53 to 235 folds into the IRG-type G domain; the sequence is TRLEVGVTGE…PLLMSTWERD (183 aa). GTP is bound by residues 62-69, 87-91, 169-171, and 216-218; these read ESGAGKSS, TGVVE, KVD, and SNL. Phosphoserine is present on residues serine 247 and serine 304. A disordered region spans residues 405 to 438; it reads EEEEDTQPDVSLEAAGDNGVEKRGSGEGSMEEAP.

It belongs to the TRAFAC class dynamin-like GTPase superfamily. IRG family.

Its subcellular location is the cell projection. It is found in the cilium. The protein localises to the flagellum. The protein resides in the lipid droplet. It catalyses the reaction GTP + H2O = GDP + phosphate + H(+). Required for sperm motility and therefore male fertility, via positive regulation of spermatozoa fibrous sheath formation. The chain is Interferon-inducible GTPase 5 (IRGC) from Bos taurus (Bovine).